Consider the following 227-residue polypeptide: Cytidylate kinase (227 aa).

12–20 (GPSGAGKGT) contacts ATP.

It belongs to the cytidylate kinase family. Type 1 subfamily.

The protein resides in the cytoplasm. It carries out the reaction CMP + ATP = CDP + ADP. It catalyses the reaction dCMP + ATP = dCDP + ADP. The sequence is that of Cytidylate kinase from Erwinia tasmaniensis (strain DSM 17950 / CFBP 7177 / CIP 109463 / NCPPB 4357 / Et1/99).